The primary structure comprises 224 residues: uncharacterized protein (224 aa).

Positions 1–19 are cleaved as a signal peptide; sequence MLRHITFTVFITTSMNTLA.

This sequence belongs to the periplasmic pilus chaperone family.

It is found in the periplasm. Its function is as follows. Could be required for the biogenesis of a putative fimbria. This is an uncharacterized protein from Escherichia coli (strain K12).